We begin with the raw amino-acid sequence, 426 residues long: Tol-Pal system protein TolB (426 aa).

A signal peptide spans 1-25 (MNAMSRISRRIFLALALSLAGLAQA).

This sequence belongs to the TolB family. The Tol-Pal system is composed of five core proteins: the inner membrane proteins TolA, TolQ and TolR, the periplasmic protein TolB and the outer membrane protein Pal. They form a network linking the inner and outer membranes and the peptidoglycan layer.

It localises to the periplasm. Its function is as follows. Part of the Tol-Pal system, which plays a role in outer membrane invagination during cell division and is important for maintaining outer membrane integrity. This chain is Tol-Pal system protein TolB, found in Dechloromonas aromatica (strain RCB).